Reading from the N-terminus, the 126-residue chain is UPF0102 protein TP_0913 (126 aa).

This sequence belongs to the UPF0102 family.

This chain is UPF0102 protein TP_0913, found in Treponema pallidum (strain Nichols).